Consider the following 309-residue polypeptide: Coproporphyrin III ferrochelatase (309 aa).

Fe-coproporphyrin III-binding positions include tyrosine 12, threonine 14, arginine 29, 45–46 (RY), serine 53, and tyrosine 124. Histidine 182 and glutamate 263 together coordinate Fe(2+).

Belongs to the ferrochelatase family. In terms of assembly, monomer.

It localises to the cytoplasm. It carries out the reaction Fe-coproporphyrin III + 2 H(+) = coproporphyrin III + Fe(2+). It participates in porphyrin-containing compound metabolism; protoheme biosynthesis. In terms of biological role, involved in coproporphyrin-dependent heme b biosynthesis. Catalyzes the insertion of ferrous iron into coproporphyrin III to form Fe-coproporphyrin III. This chain is Coproporphyrin III ferrochelatase, found in Listeria monocytogenes serovar 1/2a (strain ATCC BAA-679 / EGD-e).